We begin with the raw amino-acid sequence, 314 residues long: Protoheme IX farnesyltransferase (314 aa).

The next 8 helical transmembrane spans lie at 31 to 51 (VMSL…GHFH), 52 to 72 (PVLA…SGAL), 119 to 139 (ILVN…YVVI), 152 to 172 (IVIG…AVTG), 179 to 199 (LLLF…LALF), 225 to 245 (ILLY…LGYF), 247 to 267 (AVYG…AINV), and 284 to 304 (FAFS…EVVF).

It belongs to the UbiA prenyltransferase family. Protoheme IX farnesyltransferase subfamily.

The protein resides in the cell inner membrane. It carries out the reaction heme b + (2E,6E)-farnesyl diphosphate + H2O = Fe(II)-heme o + diphosphate. The protein operates within porphyrin-containing compound metabolism; heme O biosynthesis; heme O from protoheme: step 1/1. Its function is as follows. Converts heme B (protoheme IX) to heme O by substitution of the vinyl group on carbon 2 of heme B porphyrin ring with a hydroxyethyl farnesyl side group. The protein is Protoheme IX farnesyltransferase of Bradyrhizobium diazoefficiens (strain JCM 10833 / BCRC 13528 / IAM 13628 / NBRC 14792 / USDA 110).